The chain runs to 105 residues: Large ribosomal subunit protein uL24 (105 aa).

The protein belongs to the universal ribosomal protein uL24 family. As to quaternary structure, part of the 50S ribosomal subunit.

One of two assembly initiator proteins, it binds directly to the 5'-end of the 23S rRNA, where it nucleates assembly of the 50S subunit. In terms of biological role, one of the proteins that surrounds the polypeptide exit tunnel on the outside of the subunit. The protein is Large ribosomal subunit protein uL24 of Xylella fastidiosa (strain 9a5c).